We begin with the raw amino-acid sequence, 60 residues long: DNA-binding protein 7c (60 aa).

The tract at residues 37–60 is disordered; the sequence is DNGKTGRGAVSEKDAPKELLEKLK. Basic and acidic residues predominate over residues 46 to 60; it reads VSEKDAPKELLEKLK.

The protein belongs to the 7 kDa DNA-binding/endoribonuclease P2 family. As to quaternary structure, monomer.

Its subcellular location is the cytoplasm. In terms of biological role, can constrain negative DNA supercoils. May be involved in maintaining the integrity of the genome at high temperature. This Acidianus hospitalis (strain W1) protein is DNA-binding protein 7c.